A 108-amino-acid chain; its full sequence is UPF0145 protein sll118 (108 aa).

It belongs to the UPF0145 family.

This Synechocystis sp. (strain ATCC 27184 / PCC 6803 / Kazusa) protein is UPF0145 protein sll118.